A 443-amino-acid chain; its full sequence is Xaa-Pro dipeptidase (443 aa).

The Mn(2+) site is built by Asp-246, Asp-257, His-339, Glu-384, and Glu-423.

It belongs to the peptidase M24B family. Bacterial-type prolidase subfamily. The cofactor is Mn(2+).

It catalyses the reaction Xaa-L-Pro dipeptide + H2O = an L-alpha-amino acid + L-proline. Its function is as follows. Splits dipeptides with a prolyl residue in the C-terminal position. The sequence is that of Xaa-Pro dipeptidase from Escherichia coli (strain SMS-3-5 / SECEC).